The chain runs to 614 residues: DNA mismatch repair protein MutL (614 aa).

The protein belongs to the DNA mismatch repair MutL/HexB family.

Functionally, this protein is involved in the repair of mismatches in DNA. It is required for dam-dependent methyl-directed DNA mismatch repair. May act as a 'molecular matchmaker', a protein that promotes the formation of a stable complex between two or more DNA-binding proteins in an ATP-dependent manner without itself being part of a final effector complex. This chain is DNA mismatch repair protein MutL, found in Thermoanaerobacter pseudethanolicus (strain ATCC 33223 / 39E) (Clostridium thermohydrosulfuricum).